Reading from the N-terminus, the 178-residue chain is Large ribosomal subunit protein uL6 (178 aa).

This sequence belongs to the universal ribosomal protein uL6 family. Part of the 50S ribosomal subunit.

In terms of biological role, this protein binds to the 23S rRNA, and is important in its secondary structure. It is located near the subunit interface in the base of the L7/L12 stalk, and near the tRNA binding site of the peptidyltransferase center. This chain is Large ribosomal subunit protein uL6, found in Streptococcus uberis (strain ATCC BAA-854 / 0140J).